The primary structure comprises 87 residues: Small ribosomal subunit protein uS17 (87 aa).

This sequence belongs to the universal ribosomal protein uS17 family. As to quaternary structure, part of the 30S ribosomal subunit.

In terms of biological role, one of the primary rRNA binding proteins, it binds specifically to the 5'-end of 16S ribosomal RNA. The polypeptide is Small ribosomal subunit protein uS17 (Staphylococcus carnosus (strain TM300)).